The primary structure comprises 381 residues: Estradiol 17-beta-dehydrogenase 2 (381 aa).

The chain crosses the membrane as a helical; Signal-anchor for type II membrane protein span at residues 4 to 24 (FSSESAWLCLTATAVLGGMLL). 83 to 112 (QKAVLVTGADSGFGHALAKHLDKLGFTVFA) provides a ligand contact to NAD(+). Serine 220 is a substrate binding site. The active-site Proton acceptor is tyrosine 233.

The protein belongs to the short-chain dehydrogenases/reductases (SDR) family. Homodimer. As to expression, highly expressed in the placenta, and in the small intestine, and liver.

The protein localises to the endoplasmic reticulum membrane. The enzyme catalyses 17beta-estradiol + NAD(+) = estrone + NADH + H(+). It carries out the reaction testosterone + NAD(+) = androst-4-ene-3,17-dione + NADH + H(+). It catalyses the reaction 17beta-hydroxy-5alpha-androstan-3-one + NAD(+) = 5alpha-androstan-3,17-dione + NADH + H(+). The catalysed reaction is (20S)-hydroxypregn-4-en-3-one + NAD(+) = progesterone + NADH + H(+). Its function is as follows. Catalyzes the NAD-dependent oxidation of highly active 17beta-hydroxysteroids, such as estradiol (E2), testosterone (T), and dihydrotestosterone (DHT), to their less active forms and thus regulates the biological potency of these steroids. Oxidizes estradiol to estrone, testosterone to androstenedione, and dihydrotestosterone to 5alpha-androstan-3,17-dione. Also has 20-alpha-HSD activity. This Rattus norvegicus (Rat) protein is Estradiol 17-beta-dehydrogenase 2 (Hsd17b2).